We begin with the raw amino-acid sequence, 521 residues long: FAD-dependent monooxygenase DEP2 (521 aa).

The signal sequence occupies residues 1–22 (MHDSPPFKVIIVGAGVTGLTLA). FAD contacts are provided by Asp-36 and Arg-109. Asn-139 and Asn-220 each carry an N-linked (GlcNAc...) asparagine glycan. Residues Asp-310 and Gly-323 each contribute to the FAD site. A helical transmembrane segment spans residues 477-497 (ILVLWAGLWLAICFFHLVFSG). Asn-515 is a glycosylation site (N-linked (GlcNAc...) asparagine).

This sequence belongs to the paxM FAD-dependent monooxygenase family. FAD is required as a cofactor.

It is found in the membrane. It functions in the pathway polyketide biosynthesis. In terms of biological role, part of the gene cluster that mediates the biosynthesis of depudecin, a highly oxidized eleven-carbon linear polyketide that acts as a histone deacetylase (HDAC) inhibitor and makes a small contribution to pathogenesis. The reducing polyketide synthase DEP5 is the central enzyme in depudecin biosynthesis by yielding the backbone polyketide chain. The monooxygenases DEP2 and DEP4, as well as the uncharacterized protein DEP1, then act as tailoring enzymes to modify the intermediate polyketide chain into depudecin. The chain is FAD-dependent monooxygenase DEP2 from Fusarium langsethiae.